We begin with the raw amino-acid sequence, 701 residues long: Elongation factor G (701 aa).

In terms of domain architecture, tr-type G spans 10–290 (AKVRNIGIMA…AVVDYLPSPL (281 aa)). Residues 19-26 (AHIDAGKT), 83-87 (DTPGH), and 137-140 (NKMD) each bind GTP.

It belongs to the TRAFAC class translation factor GTPase superfamily. Classic translation factor GTPase family. EF-G/EF-2 subfamily.

It is found in the cytoplasm. Catalyzes the GTP-dependent ribosomal translocation step during translation elongation. During this step, the ribosome changes from the pre-translocational (PRE) to the post-translocational (POST) state as the newly formed A-site-bound peptidyl-tRNA and P-site-bound deacylated tRNA move to the P and E sites, respectively. Catalyzes the coordinated movement of the two tRNA molecules, the mRNA and conformational changes in the ribosome. The sequence is that of Elongation factor G from Tropheryma whipplei (strain Twist) (Whipple's bacillus).